The sequence spans 183 residues: Copper metallothionein 2 (183 aa).

Residues 1–35 (MAFNPNPEKTTSCCSTSKAQDKCTCPKGKCECETC) form a cys-rich copper-binding 1 region. Residues 36 to 45 (PKSTKTPGSG) form a spacer B1 region. A cys-rich copper-binding 2 region spans residues 46-79 (PCNCGVKEKVSTCGCNGSGAACTCPPGQCACDSC). The segment at 80-88 (PRKAKSVST) is spacer B2. The segment at 89 to 110 (CGCGGSAAACSCPPGKCACDSC) is cys-rich copper-binding 3. The spacer B3 stretch occupies residues 111-120 (PKQAQEKVSS). The tract at residues 121–142 (CACNGSGGACTCPPGKCSCSGC) is cys-rich copper-binding 4. A spacer B4 region spans residues 143-156 (PAQAKENPADQPTT). The interval 157–183 (CGCQGVGVACTCPPGQCACDGCPAKAK) is cys-rich copper-binding 5.

This sequence belongs to the metallothionein superfamily.

Its subcellular location is the cytoplasm. It is found in the cell cortex. Its function is as follows. Copper metallothionein that protects the cell against copper toxicity by tightly chelating copper ions. Required for antioxidant-mediated growth rescue in the presence of fluconazole. Acts as a critical factors for lung colonization and virulence. This chain is Copper metallothionein 2, found in Cryptococcus neoformans var. grubii serotype A (strain H99 / ATCC 208821 / CBS 10515 / FGSC 9487) (Filobasidiella neoformans var. grubii).